The following is a 403-amino-acid chain: Dynactin subunit 2-A (403 aa).

A disordered region spans residues 1–26 (MADPKYADLPGIARNEPDVYETSDLP). A coiled-coil region spans residues 99–132 (PQQKYQRLLHEVQELTQEVEKTQSTVKESAAEEK). Residues 183-203 (AAKTRKNPEGKSPAKGPGPDT) are disordered. The stretch at 381–401 (KENLATVEDNFSNIDGRIKKL) forms a coiled coil.

The protein belongs to the dynactin subunit 2 family. In terms of assembly, subunit of dynactin, a multiprotein complex part of a tripartite complex with dynein and a adapter, such as BICDL1, BICD2 or HOOK3. The dynactin complex is built around ACTR1A/ACTB filament and consists of an actin-related filament composed of a shoulder domain, a pointed end and a barbed end. Its length is defined by its flexible shoulder domain. The soulder is composed of 2 DCTN1 subunits, 4 DCTN2 and 2 DCTN3.

The protein resides in the cytoplasm. It is found in the cytoskeleton. Its subcellular location is the microtubule organizing center. The protein localises to the centrosome. It localises to the membrane. Functionally, part of the dynactin complex that activates the molecular motor dynein for ultra-processive transport along microtubules. In the dynactin soulder domain, binds the ACTR1A filament and acts as a molecular ruler to determine the length. Modulates cytoplasmic dynein binding to an organelle, and plays a role in prometaphase chromosome alignment and spindle organization during mitosis. Involved in anchoring microtubules to centrosomes. The chain is Dynactin subunit 2-A (dctn2-a) from Xenopus laevis (African clawed frog).